The sequence spans 181 residues: Isopentenyl-diphosphate Delta-isomerase (181 aa).

2 residues coordinate Mn(2+): His24 and His30. One can recognise a Nudix hydrolase domain in the interval 28-168 (LLHLAFSVLL…PDTFSVWFPT (141 aa)). The active site involves Cys68. Mn(2+) is bound at residue His70. Glu88 contributes to the Mg(2+) binding site. 2 residues coordinate Mn(2+): Glu117 and Glu119. Residue Glu119 is part of the active site.

Belongs to the IPP isomerase type 1 family. Mg(2+) serves as cofactor. It depends on Mn(2+) as a cofactor.

It localises to the cytoplasm. It catalyses the reaction isopentenyl diphosphate = dimethylallyl diphosphate. The protein operates within isoprenoid biosynthesis; dimethylallyl diphosphate biosynthesis; dimethylallyl diphosphate from isopentenyl diphosphate: step 1/1. In terms of biological role, catalyzes the 1,3-allylic rearrangement of the homoallylic substrate isopentenyl (IPP) to its highly electrophilic allylic isomer, dimethylallyl diphosphate (DMAPP). In Aliivibrio fischeri (strain MJ11) (Vibrio fischeri), this protein is Isopentenyl-diphosphate Delta-isomerase.